The sequence spans 379 residues: Cell division protein FtsZ (379 aa).

GTP-binding positions include 18–22 (GGGVN), 105–107 (GTG), glutamate 136, arginine 140, and aspartate 184.

The protein belongs to the FtsZ family. Homodimer. Polymerizes to form a dynamic ring structure in a strictly GTP-dependent manner. Interacts directly with several other division proteins.

The protein resides in the cytoplasm. Its function is as follows. Essential cell division protein that forms a contractile ring structure (Z ring) at the future cell division site. The regulation of the ring assembly controls the timing and the location of cell division. One of the functions of the FtsZ ring is to recruit other cell division proteins to the septum to produce a new cell wall between the dividing cells. Binds GTP and shows GTPase activity. This is Cell division protein FtsZ from Mycobacterium leprae (strain TN).